A 489-amino-acid polypeptide reads, in one-letter code: Lysine-specific permease LysP (489 aa).

The Cytoplasmic segment spans residues 2–22 (VSETKTTEAPGLRRELKARHL). A helical transmembrane segment spans residues 23-43 (TMIAIGGSIGTGLFVASGATI). Residues 44-45 (SQ) are Periplasmic-facing. Residues 46 to 66 (AGPGGALLSYMLIGLMVYFLM) traverse the membrane as a helical segment. The Cytoplasmic portion of the chain corresponds to 67 to 105 (TSLGELAAYMPVSGSFATYGQNYVEEGFGFALGWNYWYN). Residues 106 to 126 (WAVTIAVDLVAAQLVMSWWFP) form a helical membrane-spanning segment. Over 127–128 (DT) the chain is Periplasmic. Residues 129 to 149 (PGWIWSALFLGVIFLLNYISV) form a helical membrane-spanning segment. Residues 150–161 (RGFGEAEYWFSL) are Cytoplasmic-facing. A helical membrane pass occupies residues 162-182 (IKVTTVIVFIIVGVLMIIGIF). Residues 183–197 (KGAQPAGWSNWTIGE) are Periplasmic-facing. Residues 198 to 218 (APFAGGFAAMIGVAMIVGFSF) traverse the membrane as a helical segment. At 219–244 (QGTELIGIAAGESEDPAKNIPRAVRQ) the chain is on the cytoplasmic side. A helical transmembrane segment spans residues 245–265 (VFWRILLFYVFAILIISLIIP). Residues 266–290 (YTDPSLLRNDVKDISVSPFTLVFQH) lie on the Periplasmic side of the membrane. Residues 291-311 (AGLLSAAAVMNAVILTAVLSA) form a helical membrane-spanning segment. At 312–346 (GNSGMYASTRMLYTLACDGKAPRIFAKLSRGGVPR) the chain is on the cytoplasmic side. The chain crosses the membrane as a helical span at residues 347–367 (NALYATTVIAGLCFLTSMFGN). The Periplasmic portion of the chain corresponds to 368-370 (QTV). A helical transmembrane segment spans residues 371–391 (YLWLLNTSGMTGFIAWLGIAI). The Cytoplasmic segment spans residues 392-413 (SHYRFRRGYVLQGHDINDLPYR). The chain crosses the membrane as a helical span at residues 414–434 (SGFFPLGPIFAFILCLIITLG). Residues 435-446 (QNYEAFLKDTID) lie on the Periplasmic side of the membrane. Residues 447–467 (WGGVAATYIGIPLFLIIWFGY) form a helical membrane-spanning segment. At 468–489 (KLIKGTHFVRYSEMKFPQNDKK) the chain is on the cytoplasmic side.

The protein belongs to the amino acid-polyamine-organocation (APC) superfamily. Amino acid transporter (AAT) (TC 2.A.3.1) family. Interacts strongly with the transcriptional activator CadC in the absence of lysine or at low lysine concentrations. Interaction is markedly attenuated under increasing lysine levels. Concomitant pH-dependent protonation of periplasmic amino acids in both proteins dissolves their electrostatic connections resulting in further destabilization of the CadC/LysP interaction. Low pH promotes oligomerization of LysP.

Its subcellular location is the cell inner membrane. The catalysed reaction is L-lysine(out) + H(+)(out) = L-lysine(in) + H(+)(in). Permease involved in lysine uptake. In addition, functions as a lysine sensor that mediates the lysine-dependent regulation of the transcriptional activator CadC. In the absence of lysine, or at low lysine concentrations, LysP inhibits CadC by an interaction with the transmembrane domain of CadC. In the presence of lysine, LysP loses its ability to interact with and inhibit CadC, and acts as a lysine permease. This Escherichia coli (strain K12) protein is Lysine-specific permease LysP.